A 178-amino-acid chain; its full sequence is Adenine phosphoribosyltransferase (178 aa).

Belongs to the purine/pyrimidine phosphoribosyltransferase family. As to quaternary structure, homodimer.

The protein resides in the cytoplasm. It catalyses the reaction AMP + diphosphate = 5-phospho-alpha-D-ribose 1-diphosphate + adenine. The protein operates within purine metabolism; AMP biosynthesis via salvage pathway; AMP from adenine: step 1/1. In terms of biological role, catalyzes a salvage reaction resulting in the formation of AMP, that is energically less costly than de novo synthesis. This chain is Adenine phosphoribosyltransferase, found in Mycoplasmoides gallisepticum (strain R(low / passage 15 / clone 2)) (Mycoplasma gallisepticum).